The sequence spans 428 residues: Histone deacetylase 3 (428 aa).

Residues Asn-3–Glu-316 are histone deacetylase. 1D-myo-inositol 1,4,5,6-tetrakisphosphate is bound by residues His-17, Gly-21, and Lys-25. Residue His-135 is part of the active site. Residues Asp-170, His-172, and Asp-259 each contribute to the Zn(2+) site. Arg-265 is a binding site for 1D-myo-inositol 1,4,5,6-tetrakisphosphate. The segment at Pro-381–Ile-428 is disordered. Composition is skewed to basic and acidic residues over residues Ser-386–Ser-405 and Asp-415–Ile-428.

This sequence belongs to the histone deacetylase family. HD type 1 subfamily.

The protein resides in the nucleus. Its subcellular location is the chromosome. The protein localises to the cytoplasm. It is found in the cytosol. It carries out the reaction N(6)-acetyl-L-lysyl-[histone] + H2O = L-lysyl-[histone] + acetate. It catalyses the reaction N(6)-acetyl-L-lysyl-[protein] + H2O = L-lysyl-[protein] + acetate. The catalysed reaction is N(6)-(2E)-butenoyl-L-lysyl-[protein] + H2O = (2E)-2-butenoate + L-lysyl-[protein]. The enzyme catalyses N(6)-(2-hydroxyisobutanoyl)-L-lysyl-[protein] + H2O = 2-hydroxy-2-methylpropanoate + L-lysyl-[protein]. It carries out the reaction N(6)-[(S)-lactoyl]-L-lysyl-[protein] + H2O = (S)-lactate + L-lysyl-[protein]. Inositol tetraphosphate (1D-myo-inositol 1,4,5,6-tetrakisphosphate) promotes the histone deacetylase activity by acting as an intermolecular glue between hdac3 and N-Cor repressor complex components. Functionally, histone deacetylase that catalyzes the deacetylation of lysine residues on the N-terminal part of the core histones (H2A, H2B, H3 and H4), and some other non-histone substrates. Histone deacetylation gives a tag for epigenetic repression and plays an important role in transcriptional regulation, cell cycle progression and developmental events. Histone deacetylases act via the formation of large multiprotein complexes, such as N-Cor repressor complex, which activate the histone deacetylase activity. Participates in the BCL6 transcriptional repressor activity by deacetylating the H3 'Lys-27' (H3K27) on enhancer elements, antagonizing EP300 acetyltransferase activity and repressing proximal gene expression. Also functions as a deacetylase for non-histone targets. In addition to protein deacetylase activity, also acts as a protein-lysine deacylase by recognizing other acyl groups: catalyzes removal of (2E)-butenoyl (crotonyl), lactoyl (lactyl) and 2-hydroxyisobutanoyl (2-hydroxyisobutyryl) acyl groups from lysine residues, leading to protein decrotonylation, delactylation and de-2-hydroxyisobutyrylation, respectively. The protein is Histone deacetylase 3 (hdac3) of Danio rerio (Zebrafish).